Reading from the N-terminus, the 592-residue chain is Methionine--tRNA ligase (592 aa).

The 'HIGH' region signature appears at 12 to 22; sequence PYANGPFHVGH. Cysteine 144, cysteine 147, cysteine 157, and cysteine 160 together coordinate Zn(2+). The 'KMSKS' region signature appears at 342–346; sequence KMSTS. Threonine 345 lines the ATP pocket.

It belongs to the class-I aminoacyl-tRNA synthetase family. MetG type 1 subfamily. In terms of assembly, monomer. Requires Zn(2+) as cofactor.

The protein resides in the cytoplasm. The catalysed reaction is tRNA(Met) + L-methionine + ATP = L-methionyl-tRNA(Met) + AMP + diphosphate. Its function is as follows. Is required not only for elongation of protein synthesis but also for the initiation of all mRNA translation through initiator tRNA(fMet) aminoacylation. In Roseiflexus sp. (strain RS-1), this protein is Methionine--tRNA ligase.